Here is a 100-residue protein sequence, read N- to C-terminus: Large ribosomal subunit protein uL23 (100 aa).

The protein belongs to the universal ribosomal protein uL23 family. Part of the 50S ribosomal subunit. Contacts protein L29, and trigger factor when it is bound to the ribosome.

One of the early assembly proteins it binds 23S rRNA. One of the proteins that surrounds the polypeptide exit tunnel on the outside of the ribosome. Forms the main docking site for trigger factor binding to the ribosome. In Salmonella paratyphi A (strain ATCC 9150 / SARB42), this protein is Large ribosomal subunit protein uL23.